Here is a 198-residue protein sequence, read N- to C-terminus: Nucleoid occlusion factor SlmA (198 aa).

An HTH tetR-type domain is found at 10–70; it reads NRREEILQSL…SLIEFIEDSL (61 aa). The segment at residues 33–52 is a DNA-binding region (H-T-H motif); it reads TTAKLAASVGVSEAALYRHF. Positions 117–144 form a coiled coil; it reads EQDRLQGRINQLFERIEAQLRQVLREKR.

It belongs to the nucleoid occlusion factor SlmA family. In terms of assembly, homodimer. Interacts with FtsZ.

The protein resides in the cytoplasm. The protein localises to the nucleoid. Required for nucleoid occlusion (NO) phenomenon, which prevents Z-ring formation and cell division over the nucleoid. Acts as a DNA-associated cell division inhibitor that binds simultaneously chromosomal DNA and FtsZ, and disrupts the assembly of FtsZ polymers. SlmA-DNA-binding sequences (SBS) are dispersed on non-Ter regions of the chromosome, preventing FtsZ polymerization at these regions. The protein is Nucleoid occlusion factor SlmA of Salmonella agona (strain SL483).